Here is a 567-residue protein sequence, read N- to C-terminus: Sensor histidine kinase MtrB (567 aa).

Positions 1–15 are enriched in basic residues; sequence MIFGSRRRIRGRRGR. The interval 1 to 20 is disordered; it reads MIFGSRRRIRGRRGRSGPMT. The next 2 helical transmembrane spans lie at 42-62 and 213-233; these read VVAL…FVLT and GTMA…ALLV. Positions 235 to 287 constitute an HAMP domain; the sequence is RQVVVPVRSASRIAERFAEGHLSERMPVRGEDDMARLAVSFNDMAESLSRQIA. A Histidine kinase domain is found at 302–519; sequence DVSHELRTPL…CFRLTLPLVR (218 aa). Histidine 305 carries the post-translational modification Phosphohistidine; by autocatalysis. The tract at residues 526–567 is disordered; sequence SPLPMKPIPQPVLQPVAQPNPQPMPPEYKERQRPREHAEWSG. The segment covering 529–551 has biased composition (pro residues); sequence PMKPIPQPVLQPVAQPNPQPMPP. Residues 552–567 are compositionally biased toward basic and acidic residues; sequence EYKERQRPREHAEWSG.

The protein localises to the cell membrane. The enzyme catalyses ATP + protein L-histidine = ADP + protein N-phospho-L-histidine.. Member of the two-component regulatory system MtrA/MtrB. Seems to function as a membrane-associated protein kinase that phosphorylates MtrA in response to environmental signals. The polypeptide is Sensor histidine kinase MtrB (mtrB) (Mycobacterium bovis (strain ATCC BAA-935 / AF2122/97)).